The primary structure comprises 287 residues: Pantothenate synthetase (287 aa).

30–37 (MGALHEGH) contributes to the ATP binding site. His37 (proton donor) is an active-site residue. Gln61 contacts (R)-pantoate. Gln61 contacts beta-alanine. 147–150 (GEKD) lines the ATP pocket. Position 153 (Gln153) interacts with (R)-pantoate. Residue 184-187 (MSSR) participates in ATP binding.

Belongs to the pantothenate synthetase family. In terms of assembly, homodimer.

The protein localises to the cytoplasm. It catalyses the reaction (R)-pantoate + beta-alanine + ATP = (R)-pantothenate + AMP + diphosphate + H(+). The protein operates within cofactor biosynthesis; (R)-pantothenate biosynthesis; (R)-pantothenate from (R)-pantoate and beta-alanine: step 1/1. In terms of biological role, catalyzes the condensation of pantoate with beta-alanine in an ATP-dependent reaction via a pantoyl-adenylate intermediate. In Granulibacter bethesdensis (strain ATCC BAA-1260 / CGDNIH1), this protein is Pantothenate synthetase.